The primary structure comprises 122 residues: Large ribosomal subunit protein uL18 (122 aa).

The protein belongs to the universal ribosomal protein uL18 family. In terms of assembly, part of the 50S ribosomal subunit; part of the 5S rRNA/L5/L18/L25 subcomplex. Contacts the 5S and 23S rRNAs.

In terms of biological role, this is one of the proteins that bind and probably mediate the attachment of the 5S RNA into the large ribosomal subunit, where it forms part of the central protuberance. In Dictyoglomus turgidum (strain DSM 6724 / Z-1310), this protein is Large ribosomal subunit protein uL18.